The sequence spans 189 residues: Group XIIA secretory phospholipase A2 (189 aa).

An N-terminal signal peptide occupies residues 1–22 (MALLSRPALTLLLLLMAAVVRC). Ca(2+)-binding residues include glycine 88, proline 90, and phenylalanine 92. Residue histidine 110 is part of the active site. Aspartate 111 contacts Ca(2+). Residue aspartate 125 is part of the active site.

Ca(2+) serves as cofactor. Abundantly expressed in heart, skeletal muscle, kidney, liver and pancreas.

It localises to the secreted. It is found in the cytoplasm. It carries out the reaction a 1,2-diacyl-sn-glycero-3-phosphocholine + H2O = a 1-acyl-sn-glycero-3-phosphocholine + a fatty acid + H(+). Its function is as follows. PA2 catalyzes the calcium-dependent hydrolysis of the 2-acyl groups in 3-sn-phosphoglycerides. Does not exhibit detectable activity toward sn-2-arachidonoyl- or linoleoyl-phosphatidylcholine or -phosphatidylethanolamine. The sequence is that of Group XIIA secretory phospholipase A2 (PLA2G12A) from Homo sapiens (Human).